The following is a 526-amino-acid chain: Adenylyl cyclase-associated protein (526 aa).

Residues 1–168 (MPDSKYTMQG…RQSKYFAYLS (168 aa)) are adenyl cyclase-binding. 3 disordered regions span residues 43 to 72 (EASK…PEVE), 255 to 304 (QSTK…DANK), and 326 to 371 (KVDK…RPPR). Over residues 45–64 (SKNNKPSDSGADANTTNEPS) the composition is skewed to polar residues. The SH3-binding motif lies at 169 to 369 (ALSEGAPLFS…KPSTLKTKRP (201 aa)). A compositionally biased stretch (low complexity) spans 262 to 274 (ATSSPSPASATAA). Over residues 275-285 (PAPPPPPPAPP) the composition is skewed to pro residues. The span at 290–302 (EISNDTPATSSDA) shows a compositional bias: polar residues. Residues 326 to 338 (KVDKSQQTHKNPE) are compositionally biased toward basic and acidic residues. Positions 342–352 (SSTVSSTGSKS) are enriched in low complexity. An interaction with SH3 domain of ABP1 region spans residues 354–361 (PPPRPKKP). Positions 357 to 370 (RPKKPSTLKTKRPP) are enriched in basic residues. One can recognise a C-CAP/cofactor C-like domain in the interval 369–504 (PPRKELVGNK…EDDDYVEFPI (136 aa)). The dimerization and actin-binding stretch occupies residues 370–526 (PRKELVGNKW…FKSAVFEHAG (157 aa)). Position 454 is a phosphoserine (serine 454).

It belongs to the CAP family. In terms of assembly, homodimer.

It is found in the cytoplasm. The protein localises to the cytoskeleton. It localises to the actin patch. The N-terminal domain binds to adenylyl cyclase, thereby enabling adenylyl cyclase to be activated by upstream regulatory signals, such as Ras. The C-terminal domain is required for normal cellular morphology and growth control. The chain is Adenylyl cyclase-associated protein (SRV2) from Saccharomyces cerevisiae (strain ATCC 204508 / S288c) (Baker's yeast).